Consider the following 74-residue polypeptide: Cytochrome c oxidase copper chaperone 1 (74 aa).

Positions 1–30 (MTDQPAQNGLIPPPTSEPSKAAASAETKPK) are disordered. Residues cysteine 34 and cysteine 35 each coordinate Cu cation. The CHCH domain occupies 34–74 (CCACPDTKKLRDECIVEHGESACTKWIEAHKICLRAEGFNV). 2 short sequence motifs (cx9C motif) span residues 37–47 (CPDTKKLRDEC) and 56–66 (CTKWIEAHKIC). 2 disulfide bridges follow: cysteine 37–cysteine 66 and cysteine 47–cysteine 56.

Belongs to the COX17 family.

The protein localises to the mitochondrion intermembrane space. Functionally, copper chaperone for cytochrome c oxidase (COX). Binds 2 copper ions and delivers them to the Cu(A) site of COX. Can complement the yeast mutant cox17. The polypeptide is Cytochrome c oxidase copper chaperone 1 (COX17-1) (Arabidopsis thaliana (Mouse-ear cress)).